The chain runs to 119 residues: Ribonuclease P protein component (119 aa).

Belongs to the RnpA family. As to quaternary structure, consists of a catalytic RNA component (M1 or rnpB) and a protein subunit.

The enzyme catalyses Endonucleolytic cleavage of RNA, removing 5'-extranucleotides from tRNA precursor.. In terms of biological role, RNaseP catalyzes the removal of the 5'-leader sequence from pre-tRNA to produce the mature 5'-terminus. It can also cleave other RNA substrates such as 4.5S RNA. The protein component plays an auxiliary but essential role in vivo by binding to the 5'-leader sequence and broadening the substrate specificity of the ribozyme. This is Ribonuclease P protein component from Salmonella schwarzengrund (strain CVM19633).